A 147-amino-acid chain; its full sequence is Fluoride-specific ion channel FluC 1 (147 aa).

4 consecutive transmembrane segments (helical) span residues 29-49, 61-81, 90-110, and 118-138; these read YVYI…ISFL, IANL…IAFF, AITT…LELI, and FITL…LCYV. Positions 97 and 100 each coordinate Na(+).

It belongs to the fluoride channel Fluc/FEX (TC 1.A.43) family.

The protein resides in the cell membrane. It catalyses the reaction fluoride(in) = fluoride(out). Na(+) is not transported, but it plays an essential structural role and its presence is essential for fluoride channel function. Functionally, fluoride-specific ion channel. Important for reducing fluoride concentration in the cell, thus reducing its toxicity. The protein is Fluoride-specific ion channel FluC 1 of Staphylococcus aureus (strain Mu50 / ATCC 700699).